Consider the following 443-residue polypeptide: ATP-dependent protease ATPase subunit HslU (443 aa).

Residues Ile19, 61–66 (GVGKTE), Asp256, Glu321, and Arg393 each bind ATP.

The protein belongs to the ClpX chaperone family. HslU subfamily. In terms of assembly, a double ring-shaped homohexamer of HslV is capped on each side by a ring-shaped HslU homohexamer. The assembly of the HslU/HslV complex is dependent on binding of ATP.

Its subcellular location is the cytoplasm. In terms of biological role, ATPase subunit of a proteasome-like degradation complex; this subunit has chaperone activity. The binding of ATP and its subsequent hydrolysis by HslU are essential for unfolding of protein substrates subsequently hydrolyzed by HslV. HslU recognizes the N-terminal part of its protein substrates and unfolds these before they are guided to HslV for hydrolysis. This Ralstonia pickettii (strain 12J) protein is ATP-dependent protease ATPase subunit HslU.